A 344-amino-acid polypeptide reads, in one-letter code: 5-formaminoimidazole-4-carboxamide-1-(beta)-D-ribofuranosyl 5'-monophosphate synthetase (344 aa).

Residues His-31 and Ser-96 each contribute to the 5-amino-1-(5-phospho-beta-D-ribosyl)imidazole-4-carboxamide site. The ATP-grasp domain occupies 130 to 324; it reads MELLQRAGVP…YFDRPMDMGE (195 aa). ATP-binding positions include 153 to 198 and Glu-220; that span reads PVIV…VPAY. Asn-240 is a binding site for 5-amino-1-(5-phospho-beta-D-ribosyl)imidazole-4-carboxamide. The Mg(2+) site is built by Glu-279 and Glu-292.

It belongs to the phosphohexose mutase family. Mg(2+) is required as a cofactor. It depends on Mn(2+) as a cofactor.

It carries out the reaction 5-amino-1-(5-phospho-beta-D-ribosyl)imidazole-4-carboxamide + formate + ATP = 5-formamido-1-(5-phospho-D-ribosyl)imidazole-4-carboxamide + ADP + phosphate. The protein operates within purine metabolism; IMP biosynthesis via de novo pathway; 5-formamido-1-(5-phospho-D-ribosyl)imidazole-4-carboxamide from 5-amino-1-(5-phospho-D-ribosyl)imidazole-4-carboxamide (formate route): step 1/1. Its function is as follows. Catalyzes the ATP- and formate-dependent formylation of 5-aminoimidazole-4-carboxamide-1-beta-d-ribofuranosyl 5'-monophosphate (AICAR) to 5-formaminoimidazole-4-carboxamide-1-beta-d-ribofuranosyl 5'-monophosphate (FAICAR) in the absence of folates. This chain is 5-formaminoimidazole-4-carboxamide-1-(beta)-D-ribofuranosyl 5'-monophosphate synthetase, found in Pyrobaculum neutrophilum (strain DSM 2338 / JCM 9278 / NBRC 100436 / V24Sta) (Thermoproteus neutrophilus).